The sequence spans 336 residues: Potassium channel subfamily K member 1 (336 aa).

Residues methionine 1–alanine 20 lie on the Cytoplasmic side of the membrane. The chain crosses the membrane as a helical span at residues tryptophan 21–phenylalanine 41. Residues serine 42 to aspartate 103 are Extracellular-facing. Asparagine 95 is a glycosylation site (N-linked (GlcNAc...) asparagine). The helical intramembrane region spans phenylalanine 104–serine 116. An intramembrane segment occupies threonine 117–histidine 122. A selectivity filter 1 region spans residues threonine 117 to histidine 122. Over threonine 123–alanine 132 the chain is Extracellular. The chain crosses the membrane as a helical span at residues phenylalanine 133–isoleucine 156. At threonine 157 to isoleucine 181 the chain is on the cytoplasmic side. A helical transmembrane segment spans residues valine 182–valine 202. The Extracellular segment spans residues phenylalanine 203–asparagine 211. The helical intramembrane region spans phenylalanine 212–serine 224. The tract at residues threonine 225–aspartate 230 is selectivity filter 2. Residues threonine 225–tyrosine 231 lie within the membrane without spanning it. Residues valine 232 to glutamate 243 lie on the Extracellular side of the membrane. The helical transmembrane segment at leucine 244–phenylalanine 267 threads the bilayer. Topologically, residues cysteine 268 to histidine 336 are cytoplasmic. Lysine 274 is covalently cross-linked (Glycyl lysine isopeptide (Lys-Gly) (interchain with G-Cter in SUMO)). The tract at residues isoleucine 293–leucine 299 is important for intracellular retention in recycling endosomes. Position 326 is a phosphoserine (serine 326).

The protein belongs to the two pore domain potassium channel (TC 1.A.1.8) family. As to quaternary structure, homodimer; disulfide-linked. Heterodimer with KCNK2; disulfide-linked. In astrocytes, forms mostly heterodimeric potassium channels with KCNK2, with only a minor proportion of functional channels containing homodimeric KCNK1. Interacts with KCNK3 and KCNK9, forming functional heterodimeric channels. Interacts with GNG4. Identified in a complex with PSD and ARF6; interacts only with PSD that is bound to ARF6. Interacts with UBE2I. Post-translationally, sumoylation is controversial. Sumoylated by UBE2I. Not sumoylated when expressed in xenopus oocytes or mammalian cells. Sumoylation inactivates the channel, but does not interfere with expression at the cell membrane. Sumoylation of a single subunit is sufficient to silence the dimeric channel. Sumoylation of KCNK1 is sufficient to silence heterodimeric channels formed by KCNK1 and KCNK3 or KCNK9. Desumoylated by SENP1; this activates the channel. Desumoylated by SENP1; this strongly increases halothane-mediated activation of heterodimeric channels formed with KCNK9. SENP1 treatment has no effect. As to expression, detected in bronchial epithelial cells. Detected in heart left atrium and left ventricle. Detected in cardiac myocytes (at protein level). Widely expressed with high levels in heart, brain and kidney, and lower levels in colon, ovary, placenta, lung and liver. Highly expressed in cerebellum, and detected at lower levels in amygdala, caudate nucleus, brain cortex, hippocampus, putamen, substantia nigra, thalamus, dorsal root ganglion, spinal cord, pituitary, heart, kidney, lung, placenta, pancreas, stomach, small intestine, uterus and prostate. Detected in right and left heart ventricle and atrium, and in heart Purkinje fibers.

The protein localises to the cell membrane. It localises to the recycling endosome. It is found in the synaptic cell membrane. The protein resides in the cytoplasmic vesicle. Its subcellular location is the perikaryon. The protein localises to the cell projection. It localises to the dendrite. It is found in the apical cell membrane. The catalysed reaction is K(+)(in) = K(+)(out). The enzyme catalyses NH4(+)(in) = NH4(+)(out). It carries out the reaction Na(+)(in) = Na(+)(out). It catalyses the reaction Rb(+)(in) = Rb(+)(out). The catalysed reaction is Cs(+)(in) = Cs(+)(out). The enzyme catalyses Li(+)(in) = Li(+)(out). It carries out the reaction L-glutamate(out) = L-glutamate(in). It catalyses the reaction chloride(in) = chloride(out). Its activity is regulated as follows. Inhibited by Ba(2+) ions and quinidine. Inhibited by quinine. Is slightly inhibited by 10 mM tetraethylammonium (TEA), and only marginally inhibited by 4-aminopyridine, charybdotoxin and dendrotoxin. Lowering the extracellular pH to below 6.5 transiently activates the channel, and then inhibits channel activity. Inhibited when the intracellular pH is decreased down to pH 6.0, but this may be due to indirect effects. Its function is as follows. Ion channel that contributes to passive transmembrane potassium transport and to the regulation of the resting membrane potential in brain astrocytes, but also in kidney and in other tissues. Forms dimeric channels through which potassium ions pass in accordance with their electrochemical gradient. The channel is selective for K(+) ions at physiological potassium concentrations and at neutral pH, but becomes permeable to Na(+) at subphysiological K(+) levels and upon acidification of the extracellular medium. The homodimer has very low potassium channel activity, when expressed in heterologous systems, and can function as weakly inward rectifying potassium channel. Channel activity is modulated by activation of serotonin receptors. Heterodimeric channels containing KCNK1 and KCNK2 have much higher activity, and may represent the predominant form in astrocytes. Heterodimeric channels containing KCNK1 and KCNK3 or KCNK9 have much higher activity. Heterodimeric channels formed by KCNK1 and KCNK9 may contribute to halothane-sensitive currents. Mediates outward rectifying potassium currents in dentate gyrus granule cells and contributes to the regulation of their resting membrane potential. Contributes to the regulation of action potential firing in dentate gyrus granule cells and down-regulates their intrinsic excitability. In astrocytes, the heterodimer formed by KCNK1 and KCNK2 is required for rapid glutamate release in response to activation of G-protein coupled receptors, such as F2R and CNR1. Required for normal ion and water transport in the kidney. Contributes to the regulation of the resting membrane potential of pancreatic beta cells. The low channel activity of homodimeric KCNK1 may be due to sumoylation. The low channel activity may be due to rapid internalization from the cell membrane and retention in recycling endosomes. Permeable to monovalent cations with ion selectivity for K(+) &gt; Rb(+) &gt;&gt; NH4(+) &gt;&gt; Cs(+) = Na(+) = Li(+). This is Potassium channel subfamily K member 1 (KCNK1) from Homo sapiens (Human).